The chain runs to 193 residues: Peptidyl-tRNA hydrolase (193 aa).

Y18 serves as a coordination point for tRNA. The active-site Proton acceptor is the H23. Residues F69, N71, and N117 each contribute to the tRNA site.

This sequence belongs to the PTH family. Monomer.

The protein resides in the cytoplasm. It carries out the reaction an N-acyl-L-alpha-aminoacyl-tRNA + H2O = an N-acyl-L-amino acid + a tRNA + H(+). In terms of biological role, hydrolyzes ribosome-free peptidyl-tRNAs (with 1 or more amino acids incorporated), which drop off the ribosome during protein synthesis, or as a result of ribosome stalling. Catalyzes the release of premature peptidyl moieties from peptidyl-tRNA molecules trapped in stalled 50S ribosomal subunits, and thus maintains levels of free tRNAs and 50S ribosomes. The chain is Peptidyl-tRNA hydrolase from Teredinibacter turnerae (strain ATCC 39867 / T7901).